Reading from the N-terminus, the 137-residue chain is Flavodoxin (137 aa).

A Flavodoxin-like domain is found at 2 to 137 (VEIVYWSGTG…KELGEAAAKA (136 aa)).

The protein belongs to the flavodoxin family. It depends on FMN as a cofactor.

Low-potential electron donor to a number of redox enzymes. The sequence is that of Flavodoxin from Megasphaera elsdenii.